The following is a 362-amino-acid chain: Peptide chain release factor 1 (362 aa).

N5-methylglutamine is present on Gln237. The interval 289–308 (AAEISDTRRNLLGSGDRSDR) is disordered.

It belongs to the prokaryotic/mitochondrial release factor family. Post-translationally, methylated by PrmC. Methylation increases the termination efficiency of RF1.

Its subcellular location is the cytoplasm. Functionally, peptide chain release factor 1 directs the termination of translation in response to the peptide chain termination codons UAG and UAA. The sequence is that of Peptide chain release factor 1 from Vibrio cholerae serotype O1 (strain ATCC 39541 / Classical Ogawa 395 / O395).